The chain runs to 435 residues: Serine--tRNA ligase (435 aa).

Residue 242–244 participates in L-serine binding; that stretch reads TAE. 273–275 lines the ATP pocket; sequence RSE. Glu296 contributes to the L-serine binding site. 360-363 is an ATP binding site; that stretch reads EISS. Residue Ser396 participates in L-serine binding.

It belongs to the class-II aminoacyl-tRNA synthetase family. Type-1 seryl-tRNA synthetase subfamily. As to quaternary structure, homodimer. The tRNA molecule binds across the dimer.

It is found in the cytoplasm. It catalyses the reaction tRNA(Ser) + L-serine + ATP = L-seryl-tRNA(Ser) + AMP + diphosphate + H(+). The enzyme catalyses tRNA(Sec) + L-serine + ATP = L-seryl-tRNA(Sec) + AMP + diphosphate + H(+). It participates in aminoacyl-tRNA biosynthesis; selenocysteinyl-tRNA(Sec) biosynthesis; L-seryl-tRNA(Sec) from L-serine and tRNA(Sec): step 1/1. Catalyzes the attachment of serine to tRNA(Ser). Is also able to aminoacylate tRNA(Sec) with serine, to form the misacylated tRNA L-seryl-tRNA(Sec), which will be further converted into selenocysteinyl-tRNA(Sec). This is Serine--tRNA ligase from Vibrio parahaemolyticus serotype O3:K6 (strain RIMD 2210633).